The sequence spans 647 residues: Knirps-related protein (647 aa).

A DNA-binding region (nuclear receptor) is located at residues 11-87 (NQTCKVCGEP…VGMSKSGSRY (77 aa)). 2 consecutive NR C4-type zinc fingers follow at residues 14 to 34 (CKVC…CEGC) and 51 to 75 (CKNN…LKKC). Disordered regions lie at residues 111-142 (MAAH…KGMS), 196-274 (HKHP…LSPF), 340-383 (GAGQ…LLTN), and 402-600 (SQQQ…NSIL). Over residues 120-134 (AGGGSSGGSGGGQGM) the composition is skewed to gly residues. 2 stretches are compositionally biased toward low complexity: residues 200–223 (VVAS…VSSV) and 232–247 (GGKS…ADGS). The segment covering 248-260 (HSGGGGGGGGGVT) has biased composition (gly residues). Composition is skewed to polar residues over residues 370–381 (SPSTHANNNHLL) and 420–432 (DYSI…PNSE). 2 stretches are compositionally biased toward basic and acidic residues: residues 433–443 (SGRERVKSRQN) and 480–491 (QEERTPAGEDPR). The span at 502 to 519 (LSMKTTGSSLSSKSSSPE) shows a compositional bias: low complexity. Residues 520–541 (IEPETEISSDVEKNDTDDDDED) show a composition bias toward acidic residues. Residues 542 to 556 (LKVTPEEEISVRETA) are compositionally biased toward basic and acidic residues. Residues 567–579 (TTETAKTSIENTH) are compositionally biased toward polar residues. Residues 580–599 (NNNNSISNNNNNNNNNNNSI) show a composition bias toward low complexity.

This sequence belongs to the nuclear hormone receptor family. NR0 subfamily.

It is found in the nucleus. This is Knirps-related protein (knrl) from Drosophila melanogaster (Fruit fly).